The sequence spans 418 residues: Gamma-glutamyl phosphate reductase (418 aa).

The protein belongs to the gamma-glutamyl phosphate reductase family.

It is found in the cytoplasm. The catalysed reaction is L-glutamate 5-semialdehyde + phosphate + NADP(+) = L-glutamyl 5-phosphate + NADPH + H(+). It participates in amino-acid biosynthesis; L-proline biosynthesis; L-glutamate 5-semialdehyde from L-glutamate: step 2/2. Functionally, catalyzes the NADPH-dependent reduction of L-glutamate 5-phosphate into L-glutamate 5-semialdehyde and phosphate. The product spontaneously undergoes cyclization to form 1-pyrroline-5-carboxylate. This chain is Gamma-glutamyl phosphate reductase, found in Desulfotalea psychrophila (strain LSv54 / DSM 12343).